A 193-amino-acid polypeptide reads, in one-letter code: MAQSDITIDALSKVGQQDAEYLVSLVRSVPGFPKEGIIFRDFMPVLADPKGLKILLKALEEALPVSPSEFDSIAGLESRGFLFGPAMAAHLGKGFIAVRKAGKLPPETIGESYDLEYGTASVEIETDAVQAGKRVLIVDDLIATGGTAKAATDLIEKAGGTVVGFSFVMRLDGLDGLDKLDGKPSSSLIAMPA.

Belongs to the purine/pyrimidine phosphoribosyltransferase family. As to quaternary structure, homodimer.

It is found in the cytoplasm. The catalysed reaction is AMP + diphosphate = 5-phospho-alpha-D-ribose 1-diphosphate + adenine. It functions in the pathway purine metabolism; AMP biosynthesis via salvage pathway; AMP from adenine: step 1/1. In terms of biological role, catalyzes a salvage reaction resulting in the formation of AMP, that is energically less costly than de novo synthesis. The polypeptide is Adenine phosphoribosyltransferase (Bifidobacterium longum (strain DJO10A)).